A 205-amino-acid polypeptide reads, in one-letter code: Putative protein phosphatase inhibitor 2-like protein 1 (205 aa).

Disordered regions lie at residues 1–44 (MAAS…SKKS), 64–92 (GLMK…TETT), 107–148 (AEGL…TLHY), and 171–205 (VEEM…SRSS). Required for binding PPP1CC regions lie at residues 12–17 (KGILKD) and 43–55 (KSQK…ILAT). Over residues 17 to 26 (DNTSTTSSMV) the composition is skewed to polar residues. The segment covering 30–44 (EHPRGSVHEQLSKKS) has biased composition (basic and acidic residues). T73 bears the Phosphothreonine; by GSK3 mark. 2 stretches are compositionally biased toward acidic residues: residues 80-91 (GDDEDACSDTET) and 121-130 (SSGEEDSDLS). S87 is modified (phosphoserine; by CK2). The segment covering 131–144 (PEEREKKRQFEMRR) has biased composition (basic and acidic residues). The required for binding PPP1CC catalytic center, displacing metal ions and inhibition of PPP1CC catalytic activity stretch occupies residues 147–150 (HYNE). The segment covering 182–205 (SMNTEESNQGSTASDQQQNKSRSS) has biased composition (polar residues).

It belongs to the protein phosphatase inhibitor 2 family.

Functionally, inhibitor of protein-phosphatase 1. The protein is Putative protein phosphatase inhibitor 2-like protein 1 (PPP1R2P1) of Homo sapiens (Human).